Here is a 305-residue protein sequence, read N- to C-terminus: tRNA dimethylallyltransferase (305 aa).

An ATP-binding site is contributed by 11–18 (GPTAVGKT). Residue 13 to 18 (TAVGKT) coordinates substrate. The interaction with substrate tRNA stretch occupies residues 36-39 (DSMQ).

Belongs to the IPP transferase family. In terms of assembly, monomer. The cofactor is Mg(2+).

It catalyses the reaction adenosine(37) in tRNA + dimethylallyl diphosphate = N(6)-dimethylallyladenosine(37) in tRNA + diphosphate. Functionally, catalyzes the transfer of a dimethylallyl group onto the adenine at position 37 in tRNAs that read codons beginning with uridine, leading to the formation of N6-(dimethylallyl)adenosine (i(6)A). This is tRNA dimethylallyltransferase from Listeria monocytogenes serovar 1/2a (strain ATCC BAA-679 / EGD-e).